The primary structure comprises 95 residues: Integration host factor subunit beta (95 aa).

The segment at 56–95 is disordered; that stretch reads RAPRTGRNPKTGETVELDGKHVPHFKPGKELRDRVNESIA. Basic and acidic residues predominate over residues 72-95; sequence LDGKHVPHFKPGKELRDRVNESIA.

The protein belongs to the bacterial histone-like protein family. In terms of assembly, heterodimer of an alpha and a beta chain.

Its function is as follows. This protein is one of the two subunits of integration host factor, a specific DNA-binding protein that functions in genetic recombination as well as in transcriptional and translational control. In Pseudoalteromonas translucida (strain TAC 125), this protein is Integration host factor subunit beta.